Reading from the N-terminus, the 148-residue chain is U2 snRNP component IST3 (148 aa).

In terms of domain architecture, RRM spans 31–109; it reads AYIYIGNLNR…RALKIDHTFY (79 aa).

It belongs to the IST3 family. In terms of assembly, component of the 45S U1.U2.U4/U6.U5 penta-snRNP particle, a subcomplex of the spliceosome. Belongs to the CWC complex (or CEF1-associated complex), a spliceosome sub-complex reminiscent of a late-stage spliceosome composed of the U2, U5 and U6 snRNAs and at least BUD13, BUD31, BRR2, CDC40, CEF1, CLF1, CUS1, CWC2, CWC15, CWC21, CWC22, CWC23, CWC24, CWC25, CWC27, ECM2, HSH155, IST3, ISY1, LEA1, MSL1, NTC20, PRP8, PRP9, PRP11, PRP19, PRP21, PRP22, PRP45, PRP46, SLU7, SMB1, SMD1, SMD2, SMD3, SMX2, SMX3, SNT309, SNU114, SPP2, SYF1, SYF2, RSE1 and YJU2. Belongs to the pre-mRNA retention and splicing (RES) complex composed of at least BUD13, IST3 and PML1. Subunit of the U2 snRNP. Interacts with RDS3.

It is found in the cytoplasm. The protein localises to the nucleus. In terms of biological role, required for pre-mRNA splicing and spliceosome assembly. As part of the pre-mRNA retention and splicing (RES) complex, required for nuclear pre-mRNA retention and efficient splicing. Required for MER1-activated splicing. The sequence is that of U2 snRNP component IST3 (IST3) from Saccharomyces cerevisiae (strain ATCC 204508 / S288c) (Baker's yeast).